We begin with the raw amino-acid sequence, 234 residues long: Ubiquinone biosynthesis O-methyltransferase (234 aa).

R40, G59, D80, and M123 together coordinate S-adenosyl-L-methionine.

Belongs to the methyltransferase superfamily. UbiG/COQ3 family.

It carries out the reaction a 3-demethylubiquinol + S-adenosyl-L-methionine = a ubiquinol + S-adenosyl-L-homocysteine + H(+). It catalyses the reaction a 3-(all-trans-polyprenyl)benzene-1,2-diol + S-adenosyl-L-methionine = a 2-methoxy-6-(all-trans-polyprenyl)phenol + S-adenosyl-L-homocysteine + H(+). Its pathway is cofactor biosynthesis; ubiquinone biosynthesis. Functionally, O-methyltransferase that catalyzes the 2 O-methylation steps in the ubiquinone biosynthetic pathway. This is Ubiquinone biosynthesis O-methyltransferase from Coxiella burnetii (strain CbuK_Q154) (Coxiella burnetii (strain Q154)).